Reading from the N-terminus, the 178-residue chain is Cytochrome b6-f complex iron-sulfur subunit (178 aa).

Residues 20 to 42 traverse the membrane as a helical segment; sequence LLTFGTATGVALGALYPVANYFM. The Rieske domain maps to 71-161; the sequence is NHPAGDRSLV…IDVEDDKVFV (91 aa). [2Fe-2S] cluster is bound by residues C107, H109, C125, and H128. A disulfide bridge links C112 with C127.

Belongs to the Rieske iron-sulfur protein family. The 4 large subunits of the cytochrome b6-f complex are cytochrome b6, subunit IV (17 kDa polypeptide, PetD), cytochrome f and the Rieske protein, while the 4 small subunits are PetG, PetL, PetM and PetN. The complex functions as a dimer. Requires [2Fe-2S] cluster as cofactor.

Its subcellular location is the cellular thylakoid membrane. The enzyme catalyses 2 oxidized [plastocyanin] + a plastoquinol + 2 H(+)(in) = 2 reduced [plastocyanin] + a plastoquinone + 4 H(+)(out). Its function is as follows. Component of the cytochrome b6-f complex, which mediates electron transfer between photosystem II (PSII) and photosystem I (PSI), cyclic electron flow around PSI, and state transitions. This Prochlorococcus marinus (strain MIT 9211) protein is Cytochrome b6-f complex iron-sulfur subunit.